The sequence spans 341 residues: Uroporphyrinogen decarboxylase (341 aa).

Residues 23 to 27 (RQAGR), Asp73, Tyr148, Ser203, and His318 contribute to the substrate site.

The protein belongs to the uroporphyrinogen decarboxylase family. In terms of assembly, homodimer.

Its subcellular location is the cytoplasm. It carries out the reaction uroporphyrinogen III + 4 H(+) = coproporphyrinogen III + 4 CO2. It participates in porphyrin-containing compound metabolism; protoporphyrin-IX biosynthesis; coproporphyrinogen-III from 5-aminolevulinate: step 4/4. In terms of biological role, catalyzes the decarboxylation of four acetate groups of uroporphyrinogen-III to yield coproporphyrinogen-III. This is Uroporphyrinogen decarboxylase from Brucella suis (strain ATCC 23445 / NCTC 10510).